The following is a 403-amino-acid chain: Metacaspase-1 (403 aa).

Positions 1–95 (MFPGSGHNTY…PSGSQSFGQN (95 aa)) are disordered. Pro residues predominate over residues 13–22 (YPPPQGPPPN). Low complexity-rich tracts occupy residues 23 to 34 (NNGYNSGPNNSY) and 49 to 62 (QYDQ…QSQP). Residues His193 and Cys249 contribute to the active site.

Belongs to the peptidase C14B family.

Functionally, involved in cell death (apoptosis). This chain is Metacaspase-1 (MCA1), found in Scheffersomyces stipitis (strain ATCC 58785 / CBS 6054 / NBRC 10063 / NRRL Y-11545) (Yeast).